Consider the following 165-residue polypeptide: Thiol peroxidase (165 aa).

The Thioredoxin domain occupies Arg-18–Lys-164. Cys-60 (cysteine sulfenic acid (-SOH) intermediate) is an active-site residue. Cys-60 and Cys-94 form a disulfide bridge.

It belongs to the peroxiredoxin family. Tpx subfamily. As to quaternary structure, homodimer.

The enzyme catalyses a hydroperoxide + [thioredoxin]-dithiol = an alcohol + [thioredoxin]-disulfide + H2O. Thiol-specific peroxidase that catalyzes the reduction of hydrogen peroxide and organic hydroperoxides to water and alcohols, respectively. Plays a role in cell protection against oxidative stress by detoxifying peroxides. The polypeptide is Thiol peroxidase (Listeria innocua serovar 6a (strain ATCC BAA-680 / CLIP 11262)).